We begin with the raw amino-acid sequence, 175 residues long: Pituitary adenylate cyclase-activating polypeptide (175 aa).

The signal sequence occupies residues 1 to 24 (MTMCSGARLALLVYGIIMHNSVSC). Residues 25 to 78 (SPAAGLSFPGIRPEEEAYDQDGNPLQDFYDWDPPGAGSPASALRDAYALYYPAD) constitute a propeptide that is removed on maturation. The tract at residues 149-157 (VKKYLAAVL) is important for receptor binding. Position 157 is a leucine amide (leucine 157). Lysine 168 carries the post-translational modification Lysine amide. Positions 172–175 (IAYL) are excised as a propeptide.

It belongs to the glucagon family.

The protein resides in the secreted. Its function is as follows. PACAP is a neuropeptide involved in diverse array of physiological processes through activating the PACAP subfamily of class B1 G protein-coupled receptors: VIP receptor 1 (VIPR1), VIP receptor 2 (VIPR2), and PACAP type I receptor (ADCYAP1R1). Exerts neuroprotective and general cytoprotective effects due to anti-apoptotic, anti-inflammatory, and antioxidant actions. Promotes neuron projection development through the RAPGEF2/Rap1/B-Raf/ERK pathway. In chromaffin cells, induces long-lasting increase of intracellular calcium concentrations and neuroendocrine secretion. Involved in the control of glucose homeostasis, induces insulin secretion by pancreatic beta cells. PACAP exists in two bioactive forms from proteolysis of the same precursor protein, PACAP27 and PACAP38, which differ by eleven amino acid residues in the C-terminus. This Rattus norvegicus (Rat) protein is Pituitary adenylate cyclase-activating polypeptide (Adcyap1).